The chain runs to 136 residues: ATP synthase epsilon chain (136 aa).

The interval Ala-104–Asp-136 is disordered.

This sequence belongs to the ATPase epsilon chain family. In terms of assembly, F-type ATPases have 2 components, CF(1) - the catalytic core - and CF(0) - the membrane proton channel. CF(1) has five subunits: alpha(3), beta(3), gamma(1), delta(1), epsilon(1). CF(0) has three main subunits: a, b and c.

Its subcellular location is the cellular thylakoid membrane. In terms of biological role, produces ATP from ADP in the presence of a proton gradient across the membrane. This is ATP synthase epsilon chain from Synechococcus sp. (strain CC9902).